The following is a 234-amino-acid chain: uncharacterized protein (234 aa).

The interval M1 to S23 is disordered.

This is an uncharacterized protein from Caenorhabditis elegans.